Here is a 33-residue protein sequence, read N- to C-terminus: Cyanophlyctin-beta (33 aa).

A disulfide bridge connects residues C27 and C33.

In terms of tissue distribution, expressed by the skin glands.

It is found in the secreted. In terms of biological role, antimicrobial peptide active against E.coli (MIC=5 uM), K.pneumoniae (MIC=10 uM), B.cereus (MIC=7 uM) and S.aureus (MIC=12 uM). Has very little hemolytic activity. In Euphlyctis cyanophlyctis (Skittering frog), this protein is Cyanophlyctin-beta.